A 187-amino-acid chain; its full sequence is UPF0301 protein YqgE (187 aa).

Belongs to the UPF0301 (AlgH) family.

The polypeptide is UPF0301 protein YqgE (Escherichia coli O139:H28 (strain E24377A / ETEC)).